The sequence spans 377 residues: 3-dehydroquinate synthase (377 aa).

Residues 115-119 (GVIGD), 139-140 (TS), K152, and K161 contribute to the NAD(+) site. 3 residues coordinate Zn(2+): E194, H256, and H275.

The protein belongs to the sugar phosphate cyclases superfamily. Dehydroquinate synthase family. Requires Co(2+) as cofactor. It depends on Zn(2+) as a cofactor. NAD(+) serves as cofactor.

The protein localises to the cytoplasm. The enzyme catalyses 7-phospho-2-dehydro-3-deoxy-D-arabino-heptonate = 3-dehydroquinate + phosphate. Its pathway is metabolic intermediate biosynthesis; chorismate biosynthesis; chorismate from D-erythrose 4-phosphate and phosphoenolpyruvate: step 2/7. Its function is as follows. Catalyzes the conversion of 3-deoxy-D-arabino-heptulosonate 7-phosphate (DAHP) to dehydroquinate (DHQ). The sequence is that of 3-dehydroquinate synthase from Rhizobium rhizogenes (strain K84 / ATCC BAA-868) (Agrobacterium radiobacter).